Consider the following 124-residue polypeptide: Small ribosomal subunit protein bS16 (124 aa).

The span at 84–110 shows a compositional bias: basic and acidic residues; it reads EKAERKNLKKGEPGKAAKERAEKRAAR. The interval 84-124 is disordered; the sequence is EKAERKNLKKGEPGKAAKERAEKRAAREAAANAPAEEAASE. The span at 111–124 shows a compositional bias: low complexity; the sequence is EAAANAPAEEAASE.

This sequence belongs to the bacterial ribosomal protein bS16 family.

In Paracoccus denitrificans (strain Pd 1222), this protein is Small ribosomal subunit protein bS16.